The sequence spans 407 residues: Arginine deiminase (407 aa).

The active-site Amidino-cysteine intermediate is Cys397.

It belongs to the arginine deiminase family.

Its subcellular location is the cytoplasm. The catalysed reaction is L-arginine + H2O = L-citrulline + NH4(+). It functions in the pathway amino-acid degradation; L-arginine degradation via ADI pathway; carbamoyl phosphate from L-arginine: step 1/2. This Salmonella arizonae (strain ATCC BAA-731 / CDC346-86 / RSK2980) protein is Arginine deiminase.